Consider the following 303-residue polypeptide: uncharacterized protein (303 aa).

The next 4 membrane-spanning stretches (helical) occupy residues 55–77 (FLVK…LFIQ), 92–111 (PAVF…TKII), 208–230 (FSLP…ATSL), and 240–257 (IPHI…KILI).

The protein localises to the cell membrane. This is an uncharacterized protein from Bacillus subtilis (strain 168).